We begin with the raw amino-acid sequence, 524 residues long: Sexual development regulator velC (524 aa).

4 disordered regions span residues 114–195, 322–349, 380–413, and 503–524; these read NRVL…PVHS, PGSG…MSSY, VDEE…HRFR, and GMGK…ARVE. Composition is skewed to polar residues over residues 131–153 and 178–195; these read TTGS…ENAG and LDSQ…PVHS. One can recognise a Velvet domain in the interval 248-500; it reads SSSSRYRLFI…ELGFVELKTR (253 aa). Over residues 393–402 the composition is skewed to polar residues; sequence PSSTDDSTYD.

This sequence belongs to the velvet family. VelC subfamily. In terms of assembly, interacts with vosA.

It localises to the nucleus. Velvet-domain-containing protein that acts as a positive regulator of sexual development. Positively regulates the production of the sexual fruiting bodies called cleistothecia. The protein is Sexual development regulator velC of Emericella nidulans (strain FGSC A4 / ATCC 38163 / CBS 112.46 / NRRL 194 / M139) (Aspergillus nidulans).